We begin with the raw amino-acid sequence, 90 residues long: Progonadoliberin-3 (90 aa).

A signal peptide spans 1–23 (MEASSRVTVQVLLLALVVQVTLS). Gln-24 is subject to Pyrrolidone carboxylic acid. Position 33 is a glycine amide (Gly-33).

The protein belongs to the GnRH family.

It is found in the secreted. In terms of biological role, stimulates the secretion of gonadotropins. The protein is Progonadoliberin-3 (gnrh3) of Sparus aurata (Gilthead sea bream).